We begin with the raw amino-acid sequence, 210 residues long: Transcriptional regulator DauR (210 aa).

This sequence belongs to the DauR family.

Functionally, dauR represses the dauBAR operon. In Pseudomonas aeruginosa (strain ATCC 15692 / DSM 22644 / CIP 104116 / JCM 14847 / LMG 12228 / 1C / PRS 101 / PAO1), this protein is Transcriptional regulator DauR.